We begin with the raw amino-acid sequence, 256 residues long: Protein FixA (256 aa).

It belongs to the ETF beta-subunit/FixA family. Heterodimer of FixA and FixB.

It functions in the pathway amine and polyamine metabolism; carnitine metabolism. Required for anaerobic carnitine reduction. May bring reductant to CaiA. In Escherichia coli O7:K1 (strain IAI39 / ExPEC), this protein is Protein FixA.